The following is a 474-amino-acid chain: tRNA-2-methylthio-N(6)-dimethylallyladenosine synthase (474 aa).

Positions 3–120 constitute an MTTase N-terminal domain; that stretch reads KKLHIKTWGC…LPEMIEQVRR (118 aa). [4Fe-4S] cluster-binding residues include C12, C49, C83, C157, C161, and C164. The Radical SAM core domain occupies 143 to 375; the sequence is RAEGPTAFVS…QDRITQQAMR (233 aa). The TRAM domain maps to 378–441; sequence RHMMGTVQRI…TNSLRGVFIR (64 aa).

This sequence belongs to the methylthiotransferase family. MiaB subfamily. In terms of assembly, monomer. It depends on [4Fe-4S] cluster as a cofactor.

It localises to the cytoplasm. The enzyme catalyses N(6)-dimethylallyladenosine(37) in tRNA + (sulfur carrier)-SH + AH2 + 2 S-adenosyl-L-methionine = 2-methylsulfanyl-N(6)-dimethylallyladenosine(37) in tRNA + (sulfur carrier)-H + 5'-deoxyadenosine + L-methionine + A + S-adenosyl-L-homocysteine + 2 H(+). Functionally, catalyzes the methylthiolation of N6-(dimethylallyl)adenosine (i(6)A), leading to the formation of 2-methylthio-N6-(dimethylallyl)adenosine (ms(2)i(6)A) at position 37 in tRNAs that read codons beginning with uridine. The sequence is that of tRNA-2-methylthio-N(6)-dimethylallyladenosine synthase from Shewanella baltica (strain OS185).